Here is a 2758-residue protein sequence, read N- to C-terminus: MFLKQQQQQPVEADFVDCQSTPRAGGPVAGTTFYTVPVRTFGVELGEYWYPGGSRGPVAFVETEKLATFPTRFCASDYAGSSHSSPQPTAVGVSRERLDRGRFLGKHGEMPTLPLDSIASCGVHRIPEYRWIGKWAEQVDDGASAVNIRRLFEASSPIIGLDARFPGDGDTAERFYDFLLAGRSARSEIPPERYNADAFWHPDGNRSGATRARAAHFLKGSISAFDAPLFSITPTEAAAMDPQQRGILESVYRALENGKFPLAVVGGCNLIISPEFALLLDAAGVLGPDGKSYSFDHRGNGYSRGEGFGVVVLKRLPDALRDGDVIRAVIRNSGSNSDGRSPGITQPTKAAQAALIKQVYANAGLDPSVTRFFEAHGTGTAVGDPIEASAIAEVFATHRSHKSPLWVGALKSNIGHLEGAAGVAAVIKGVLTLENGVIPPNTWFERKNPKILDSWNLQFPTEPVVWPQTGLRRMSINSFGVGGSNAHVVMDDALHFLQSYGLVGNHRTVALPRLPGSSSSRRVVSQADSGVEFTDSDSELKTPDGTHSPDSTAEHSKDMNFDSSCTNTDTLQTTDTNKQPKLSAIACPEVLSSSLSRLAVSDEEGRQSQIFVFSSSDKDGVSRVVNELADYLAKKAKQYKPNMRDQSKFLRDLSYTLACKRTRHAWRSFVVAKTQSSLSALLQAKSLATRAASEPQLAFVFTGQGAQWPTMGRGLMAYPTFRESLHEAEEYMTQTLRCPWSLTYELCKEAGASRINDAEFSQPVCTALQVALVDLLRTWKVRPHAVVGHSSGEIAAAYAAGQLSRQSSWRIAYYRGKLATKLIRSLRRRENSQDAHVKKTGMVAVGLDKEQTLAAISRVDSLVGEGSLEIACMNSQESHTVSGDMAKLDALVEVLKSENVFARKLSVGIGYHSRHMLPIADEYVRLIGDIGSDLPPSQGQSLPRYFSSLEGSEITLDRLQSPDYWANNLTSPVRFHEAVELMLRADLGCNSQGESSTVGKKTVTDLLEIGPHAALRGPIRSIVKQVHQTAEWKIGYATVLKRGDGAIENALGAAGSLFCRGFDVDLAAVNQHQVESSRQSIALNGGNNVLMLTDLPGYPFNHKKEYWAESRLSRNYRFRSAPRHELLGAPVPDWDKNDAVWRNYIRITENPWVEHHKVSGEILYPAAGMLVMAIEASRQLVDKDQQVAGFRFKDVSFHLALLIPTNDVGVETRFRLRSVSAGKLAGWSEFQLSTSENDDWKEHCRGFVRTEYSQTGSNTESDSSRLVHSQCEQEIVQAKKSCTSMVHADKVYRKLSNIGLDFGTTFRTLKDVKFDGTSRILARAESQVSHIKKSMPAEYLHSHLVHPSMLDAVLQANLIPIALGSSSRDSLVPVFASDFWVSAATKEGVDFHNSAYLISSHAKLTPGTADAEAALFGIHADTGEPLVTSSGLVFKTIPNTASSGQRNHHRPALNLDWKPDPNYLTEEDALRMFGAPAITQSSDEVSDDIGDCEILCLLYIRRFLASLDDTVVEKLDWHHLRYVSWMRHVVQTTTVKPAVDNISVMEARIAAAGTPEGKLIMAVGRNLANILVTGDVDPLDVIFGDKVAENVYREGLGSRRCYAQMCAYLDALAHVNPSMKILEVGGGTGGATGSIMETLMANGARRFDHYDFTDISPSFFEHAKEAFKQTAEHMSFRVLNIEKEPTDQGYDGQSYNLVLAANVLHATKSMERTLANVRKLLKPGGKLIVFELTNPAVLLGGFCFGVLPGWWLSDEADREWGPLMVVDTWRAYLERAGFSGVDAVFDDFPDAAHQTSSILVSTALPVADASKPVTAVDNLTRYCVLMGERPSVFQRQVADALLPALARTGSVETSTITASAGRDLKGSCCIVLSELDSPTLIDMTTDVFVALQGVLNSCRRIIWLSRSGDDIVAAPDRELVTGLARVVRAEREPPFSFVTVSFAEAERSETIVDKTLQVLDRGQETAENSFRVFNGVVHVPRLVEAGYLTDHISAEANPTSTQATTQEVKLGADPRDFVAQVQSTGLLQGAGTADVCFSEDHSRQQPLADDEVEFKVMACGVGAHDVAAEDSAAGESSLSDMGIQMAGFVTRLGSTAASKFSVGDRVTGISLEGAIKTRARTQAGLLAKISDKLAWNQAAQIPMAYFTACAIIQYMGVGDSDDILLVHRAAASAAGLAAVQVARSNGAKIFATVANAQERTALQGVGGLLTDQILDLDQNTTLSTIVKSKTGNRGVSMIIDSLPQSDVDHAASLVDCLAPFGRFVSLGDGPMPGISSRRNICLERFNGAELMALDYEKAQRIFLRAARFILDEPLAANAQVPVYKFSEVSEAFAQLGKGEDAVVLEPHDEDVVKVVTSQQSHTDFTSRFDPGASYMVVGGLGGLGRSVSRWMASKGAKSLVLVSRKGAVTPEAQVLVAELQDLGVKVTTPACDATDKMALRRALDQCVAHMPPIKGVIQCSMVLKDKRFFEMSLEEWNTAIRPKVDVSVNLHDALDTASLDFFIMLSSTVGLTGSVEQANYAAGGTFQDAFARSLAASQTASSGPVAVSLDLPVILDVGFVAEKPELMDQLRAAGWAYMEEEEFHAALGYHCFQRRQLDLPTSVLRAQVAPRLWLAQDTADEGTEPPAWVRDPLFSHLRPQSSETTGNGAAGGEAGKKEMKHTALLAAATSAAEAQAVVLDALLAKLSRVLSVELSDLDPACPLSRYGVDSLVAVSLRAWIGKELGAELSVFEMTDKPSIRALAAAVAGRSRLVSKALS.

Positions 153–492 (EASSPIIGLD…GSNAHVVMDD (340 aa)) constitute a Ketosynthase family 3 (KS3) domain. Positions 512-576 (PRLPGSSSSR…NTDTLQTTDT (65 aa)) are disordered. Residues 566–576 (TNTDTLQTTDT) show a composition bias toward low complexity. Positions 700 to 1044 (VFTGQGAQWP…GYATVLKRGD (345 aa)) are malonyl-CoA:ACP transacylase (MAT) domain. Serine 790 functions as the For malonyltransferase activity in the catalytic mechanism. Residues 1124-1255 (HELLGAPVPD…GFVRTEYSQT (132 aa)) are N-terminal hotdog fold. Residues 1124 to 1442 (HELLGAPVPD…VFKTIPNTAS (319 aa)) form a dehydratase (DH) domain region. One can recognise a PKS/mFAS DH domain in the interval 1124–1443 (HELLGAPVPD…FKTIPNTASS (320 aa)). Histidine 1156 (proton acceptor; for dehydratase activity) is an active-site residue. The tract at residues 1283–1443 (TSMVHADKVY…FKTIPNTASS (161 aa)) is C-terminal hotdog fold. Aspartate 1351 serves as the catalytic Proton donor; for dehydratase activity. A methyltransferase (CMet) domain region spans residues 1622–1727 (LEVGGGTGGA…RKLLKPGGKL (106 aa)). The segment at 2031 to 2344 (GTADVCFSED…LGKGEDAVVL (314 aa)) is enoyl reductase (ER) domain. A ketoreductase (KR) domain region spans residues 2372–2553 (ASYMVVGGLG…PVAVSLDLPV (182 aa)). Residues 2673 to 2750 (EAQAVVLDAL…ALAAAVAGRS (78 aa)) form the Carrier domain. At serine 2710 the chain carries O-(pantetheine 4'-phosphoryl)serine.

Functionally, highly reducing polyketide synthase; part of the gene cluster that mediates the biosynthesis of nectriapyrone and its analogs phomopyrone A, acropyrone and zaepyrone. The nectriapyrone biosynthetic gene cluster consists of two genes, the highly reducing polyketide synthase NEC1 that produces a demethylated analog of nectriapyrone from one unit of acetyl-CoA and one unit of malonyl-CoA; and the O-methyltransferase NEC2 that further methylates the NEC1 product to yield nectriapyrone. Nectriapyrone is further hydrolyzed to nectriapyrone D, also known as gulypyrone B, by an unidentified hydrolase localized outside the nectriapyrone cluster. The polypeptide is Highly reducing polyketide synthase NEC1 (Pyricularia oryzae (strain 70-15 / ATCC MYA-4617 / FGSC 8958) (Rice blast fungus)).